We begin with the raw amino-acid sequence, 351 residues long: Peptide chain release factor 1 (351 aa).

Gln-233 carries the N5-methylglutamine modification.

The protein belongs to the prokaryotic/mitochondrial release factor family. Methylated by PrmC. Methylation increases the termination efficiency of RF1.

The protein resides in the cytoplasm. Functionally, peptide chain release factor 1 directs the termination of translation in response to the peptide chain termination codons UAG and UAA. This chain is Peptide chain release factor 1 (prfA), found in Treponema pallidum (strain Nichols).